The primary structure comprises 600 residues: CBP80/20-dependent translation initiation factor (600 aa).

Methionine 1 bears the N-acetylmethionine mark. Residues 1 to 18 are compositionally biased toward low complexity; the sequence is MENSSAASASSEAGSSRS. 4 disordered regions span residues 1–20, 43–62, 134–154, and 175–370; these read MENS…RSQE, DKTE…SQWT, KQPL…EDGD, and PHEA…SSPQ. Residues 1–305 are interaction with NCBP1/CBP80; that stretch reads MENSSAASAS…PPCSPDTLTP (305 aa). Residue serine 18 is modified to Phosphoserine. Residues 52-62 are compositionally biased toward polar residues; it reads QRTQSHISQWT. The segment covering 139–152 has biased composition (basic and acidic residues); sequence HIDREGCGKGKLED. The span at 183–198 shows a compositional bias: basic residues; that stretch reads TKKLFRRRRNDRRRQQ. Basic and acidic residues predominate over residues 258–272; that stretch reads PPGDKGEAGSHRNAK. Phosphothreonine is present on threonine 289. At serine 299 the chain carries Phosphoserine. Over residues 321–339 the composition is skewed to basic and acidic residues; that stretch reads AEIKHKDTVLPERLRERPK. In terms of domain architecture, MIF4G spans 378–579; it reads MEILNIMRNN…LEVIELHANS (202 aa).

The protein belongs to the CTIF family. In terms of assembly, interacts with NCBP1/CBP80; the interaction is direct. Associates with the eukaryotic translation initiation factor 3 (eIF-3) complex. As to expression, widely expressed.

It is found in the cytoplasm. The protein localises to the perinuclear region. Specifically required for the pioneer round of mRNA translation mediated by the cap-binding complex (CBC), that takes place during or right after mRNA export via the nuclear pore complex (NPC). Acts via its interaction with the NCBP1/CBP80 component of the CBC complex and recruits the 40S small subunit of the ribosome via eIF3. In contrast, it is not involved in steady state translation, that takes place when the CBC complex is replaced by cytoplasmic cap-binding protein eIF4E. Also required for nonsense-mediated mRNA decay (NMD), the pioneer round of mRNA translation mediated by the cap-binding complex playing a central role in nonsense-mediated mRNA decay (NMD). The protein is CBP80/20-dependent translation initiation factor (Ctif) of Mus musculus (Mouse).